The chain runs to 1309 residues: DNA repair protein RAD9 (1309 aa).

The segment covering 1–19 (MSGQLVQWKSSPDRVTQSA) has biased composition (polar residues). The disordered stretch occupies residues 1–39 (MSGQLVQWKSSPDRVTQSAIKEALHSPLADGDMNEMNVP). Phosphoserine occurs at positions 26, 56, and 205. T218 is modified (phosphothreonine). Phosphoserine is present on S248. Positions 280–299 (NIGAIEEKNPVKKKSENYSS) are disordered. The segment covering 284–299 (IEEKNPVKKKSENYSS) has biased composition (basic and acidic residues). Phosphoserine is present on residues S312 and S315. The disordered stretch occupies residues 342–365 (NSAVSGTPSRNNAEEEMYSSESVN). Residues 343–352 (SAVSGTPSRN) are compositionally biased toward polar residues. S462 carries the post-translational modification Phosphoserine. Residues T471 and T474 each carry the phosphothreonine modification. The disordered stretch occupies residues 490 to 512 (PETSSPSKNTMSKPSNSSPIPKE). Positions 491-508 (ETSSPSKNTMSKPSNSSP) are enriched in polar residues. The residue at position 568 (S568) is a Phosphoserine. Disordered stretches follow at residues 636-655 (KGNS…DKQD) and 691-731 (IIQN…NSDL). A compositionally biased stretch (basic and acidic residues) spans 642 to 655 (LHDDNKECNSDKQD). S729 is subject to Phosphoserine. The 129-residue stretch at 994 to 1122 (RTGNVFDKCI…RIVPHLIYQY (129 aa)) folds into the BRCT domain.

In terms of assembly, physically associates with RAD53.

The protein resides in the nucleus. Its function is as follows. Essential for cell cycle arrest at the G2 stage following DNA damage by X-irradiation or inactivation of DNA ligase. In Saccharomyces cerevisiae (strain ATCC 204508 / S288c) (Baker's yeast), this protein is DNA repair protein RAD9 (RAD9).